A 328-amino-acid chain; its full sequence is DNA-directed RNA polymerase subunit alpha (328 aa).

Residues 1-232 are alpha N-terminal domain (alpha-NTD); that stretch reads MSTQGFLKPR…DQISVFAALE (232 aa). The tract at residues 248–328 is alpha C-terminal domain (alpha-CTD); sequence IDPVLLRPVD…NWPPLGLERP (81 aa).

Belongs to the RNA polymerase alpha chain family. As to quaternary structure, homodimer. The RNAP catalytic core consists of 2 alpha, 1 beta, 1 beta' and 1 omega subunit. When a sigma factor is associated with the core the holoenzyme is formed, which can initiate transcription.

It carries out the reaction RNA(n) + a ribonucleoside 5'-triphosphate = RNA(n+1) + diphosphate. Functionally, DNA-dependent RNA polymerase catalyzes the transcription of DNA into RNA using the four ribonucleoside triphosphates as substrates. The sequence is that of DNA-directed RNA polymerase subunit alpha from Bordetella bronchiseptica (strain ATCC BAA-588 / NCTC 13252 / RB50) (Alcaligenes bronchisepticus).